The following is a 1415-amino-acid chain: DNA-directed RNA polymerase subunit beta' (1415 aa).

Cys-69, Cys-71, Cys-84, and Cys-87 together coordinate Zn(2+). Mg(2+)-binding residues include Asp-461, Asp-463, and Asp-465. Positions 805, 879, 886, and 889 each coordinate Zn(2+).

Belongs to the RNA polymerase beta' chain family. As to quaternary structure, the RNAP catalytic core consists of 2 alpha, 1 beta, 1 beta' and 1 omega subunit. When a sigma factor is associated with the core the holoenzyme is formed, which can initiate transcription. The cofactor is Mg(2+). Zn(2+) is required as a cofactor.

It carries out the reaction RNA(n) + a ribonucleoside 5'-triphosphate = RNA(n+1) + diphosphate. In terms of biological role, DNA-dependent RNA polymerase catalyzes the transcription of DNA into RNA using the four ribonucleoside triphosphates as substrates. This chain is DNA-directed RNA polymerase subunit beta', found in Anaplasma marginale (strain Florida).